Consider the following 269-residue polypeptide: Shikimate dehydrogenase (NADP(+)) (269 aa).

Shikimate is bound by residues S14–S16 and T61. The active-site Proton acceptor is the K65. E77 serves as a coordination point for NADP(+). The shikimate site is built by N86 and D102. NADP(+) is bound by residues G126–A130, N149–K154, and M213. Y215 is a binding site for shikimate. Residue G238 participates in NADP(+) binding.

Belongs to the shikimate dehydrogenase family. As to quaternary structure, homodimer.

It catalyses the reaction shikimate + NADP(+) = 3-dehydroshikimate + NADPH + H(+). It participates in metabolic intermediate biosynthesis; chorismate biosynthesis; chorismate from D-erythrose 4-phosphate and phosphoenolpyruvate: step 4/7. In terms of biological role, involved in the biosynthesis of the chorismate, which leads to the biosynthesis of aromatic amino acids. Catalyzes the reversible NADPH linked reduction of 3-dehydroshikimate (DHSA) to yield shikimate (SA). This chain is Shikimate dehydrogenase (NADP(+)), found in Pasteurella multocida (strain Pm70).